The sequence spans 333 residues: UbiA prenyltransferase domain-containing protein 1 (333 aa).

A disordered region spans residues 13-33 (NAESPRGGERNDCGAGAERGP). 8 helical membrane-spanning segments follow: residues 78–98 (LLVG…LVNT), 129–149 (FGVF…AVST), 155–175 (LALV…GIGF), 177–197 (YVAL…VMFA), 199–219 (AVQV…LALS), 240–260 (IVTL…TVLL), 265–285 (LIFC…LLTI), and 310–330 (LNLL…AGAL).

This sequence belongs to the UbiA prenyltransferase family.

Its subcellular location is the endoplasmic reticulum membrane. The protein resides in the golgi apparatus membrane. It localises to the mitochondrion membrane. It carries out the reaction menadiol + (2E,6E,10E)-geranylgeranyl diphosphate = menaquinol-4 + diphosphate. The catalysed reaction is all-trans-decaprenyl diphosphate + 4-hydroxybenzoate = 4-hydroxy-3-(all-trans-decaprenyl)benzoate + diphosphate. It participates in quinol/quinone metabolism; menaquinone biosynthesis. Its pathway is cofactor biosynthesis; ubiquinone biosynthesis. Its function is as follows. Prenyltransferase that mediates the formation of menaquinone-4 (MK-4) and coenzyme Q10. MK-4 is a vitamin K2 isoform required for endothelial cell development. Mediates the conversion of phylloquinone (PK) into MK-4, probably by cleaving the side chain of phylloquinone (PK) to release 2-methyl-1,4-naphthoquinone (menadione; K3) and then prenylating it with geranylgeranyl pyrophosphate (GGPP) to form MK-4. Also plays a role in cardiovascular development independently of MK-4 biosynthesis, by acting as a coenzyme Q10 biosynthetic enzyme: coenzyme Q10, also named ubiquinone, plays an important antioxidant role in the cardiovascular system. Mediates biosynthesis of coenzyme Q10 in the Golgi membrane, leading to protect cardiovascular tissues from NOS3/eNOS-dependent oxidative stress. The chain is UbiA prenyltransferase domain-containing protein 1 (UBIAD1) from Gallus gallus (Chicken).